The following is a 311-amino-acid chain: Syndecan-1 (311 aa).

Positions 1–22 (MRRAALWLWLCALALRLQPALP) are cleaved as a signal peptide. The Extracellular segment spans residues 23–255 (QIVAVNVPPE…SLLDRKEVLG (233 aa)). Disordered stretches follow at residues 29–59 (VPPEDQDGSGDDSDNFSGSGTGALPDTLSRQ) and 152–184 (SHPHGGMQPGLHETSAPTAPGQPDHQPPRVEGG). Residues 32–42 (EDQDGSGDDSD) show a composition bias toward acidic residues. O-linked (Xyl...) (chondroitin sulfate) serine glycosylation is present at serine 37. Asparagine 43 carries an N-linked (GlcNAc...) asparagine glycan. Residues serine 45 and serine 47 are each glycosylated (O-linked (Xyl...) (heparan sulfate) serine). Serine 207 and serine 217 each carry an O-linked (Xyl...) (chondroitin sulfate) serine glycan. The chain crosses the membrane as a helical span at residues 256 to 276 (GVIAGGLVGLIFAVCLVAFML). Residues 277–311 (YRMKKKDEGSYSLEEPKQANGGAYQKPTKQEEFYA) are Cytoplasmic-facing. Positions 285-311 (GSYSLEEPKQANGGAYQKPTKQEEFYA) are disordered. At serine 286 the chain carries Phosphoserine.

It belongs to the syndecan proteoglycan family. Interacts with CDCP1. Interacts (via C-terminus) with TIAM1 (via PDZ domain). Interacts with MDK. Shedding is enhanced by a number of factors such as heparanase, thrombin or EGF. Also by stress and wound healing. PMA-mediated shedding is inhibited by TIMP3.

It localises to the membrane. It is found in the secreted. Its subcellular location is the extracellular exosome. Cell surface proteoglycan that contains both heparan sulfate and chondroitin sulfate and that links the cytoskeleton to the interstitial matrix. Regulates exosome biogenesis in concert with SDCBP and PDCD6IP. Able to induce its own expression in dental mesenchymal cells and also in the neighboring dental epithelial cells via an MSX1-mediated pathway. In Mus musculus (Mouse), this protein is Syndecan-1.